Consider the following 229-residue polypeptide: Prolactin (229 aa).

The first 30 residues, 1-30, serve as a signal peptide directing secretion; the sequence is MDKKGWSLKGSLLPLLLLVSDLLLCQSVAS. C34 and C41 are disulfide-bonded. Phosphoserine is present on residues S56, S64, and S120. Disulfide bonds link C88–C204 and C221–C229.

This sequence belongs to the somatotropin/prolactin family. Interacts with PRLR.

The protein localises to the secreted. In terms of biological role, prolactin acts primarily on the mammary gland by promoting lactation. The protein is Prolactin (PRL) of Ailuropoda melanoleuca (Giant panda).